The chain runs to 495 residues: Cytochrome P450 monooxygenase 88 (495 aa).

A helical transmembrane segment spans residues 2 to 22 (FLQIVTSVLATGLLYALISVL). Residues N25 and N198 are each glycosylated (N-linked (GlcNAc...) asparagine). C428 contacts heme.

This sequence belongs to the cytochrome P450 family. Heme serves as cofactor.

Its subcellular location is the membrane. It functions in the pathway secondary metabolite biosynthesis. In terms of biological role, cytochrome P450 monooxygenase that is able to use 4-ethoxybenzoic acid as a substrate for oxidation. This is Cytochrome P450 monooxygenase 88 from Postia placenta (strain ATCC 44394 / Madison 698-R) (Brown rot fungus).